Here is a 442-residue protein sequence, read N- to C-terminus: 3-dehydroquinate synthase, chloroplastic (442 aa).

A chloroplast-targeting transit peptide spans 1-61; it reads MASSFCPKQA…TTRLKVLATS (61 aa). NAD(+) contacts are provided by residues N119, 150–152, K155, 183–188, 208–209, K221, K230, and 248–251; these read DGE, GGVIGD, TT, and TLNT. E263 serves as a coordination point for a divalent metal cation. K305 is an NAD(+) binding site. Residues H326 and H343 each contribute to the a divalent metal cation site.

Belongs to the sugar phosphate cyclases superfamily. Dehydroquinate synthase family. Homodimer. Requires a divalent metal cation as cofactor. NAD(+) serves as cofactor. As to expression, highly expressed in roots. Lower expression in stems, flowers and cotyledons. Barely detected in leaves.

It localises to the plastid. The protein localises to the chloroplast. It catalyses the reaction 7-phospho-2-dehydro-3-deoxy-D-arabino-heptonate = 3-dehydroquinate + phosphate. It participates in metabolic intermediate biosynthesis; chorismate biosynthesis; chorismate from D-erythrose 4-phosphate and phosphoenolpyruvate: step 2/7. In terms of biological role, catalyzes the second step in the shikimate pathway. This is 3-dehydroquinate synthase, chloroplastic (DHQS) from Solanum lycopersicum (Tomato).